The primary structure comprises 58 residues: Large ribosomal subunit protein bL32 (58 aa).

The protein belongs to the bacterial ribosomal protein bL32 family.

This is Large ribosomal subunit protein bL32 from Sulfurihydrogenibium sp. (strain YO3AOP1).